A 505-amino-acid polypeptide reads, in one-letter code: Glutamate--tRNA ligase (505 aa).

The 'HIGH' region signature appears at 12-22; that stretch reads PSPTGALHIGG. The 'KMSKS' region motif lies at 260-264; the sequence is KLSKR. K263 contacts ATP.

This sequence belongs to the class-I aminoacyl-tRNA synthetase family. Glutamate--tRNA ligase type 1 subfamily. As to quaternary structure, monomer.

Its subcellular location is the cytoplasm. It carries out the reaction tRNA(Glu) + L-glutamate + ATP = L-glutamyl-tRNA(Glu) + AMP + diphosphate. Catalyzes the attachment of glutamate to tRNA(Glu) in a two-step reaction: glutamate is first activated by ATP to form Glu-AMP and then transferred to the acceptor end of tRNA(Glu). The polypeptide is Glutamate--tRNA ligase (Bacteroides fragilis (strain ATCC 25285 / DSM 2151 / CCUG 4856 / JCM 11019 / LMG 10263 / NCTC 9343 / Onslow / VPI 2553 / EN-2)).